The following is a 472-amino-acid chain: Mitochondrial substrate carrier family protein C (472 aa).

The Mitochondrial intermembrane portion of the chain corresponds to 1–189; that stretch reads MVLNENDKEF…ASSLRNTITY (189 aa). 4 consecutive EF-hand domains span residues 6–41, 42–70, 73–108, and 110–145; these read NDKE…LRIP, SSEK…FEDF, ENIK…LNIP, and YSEQ…LPNS. Ca(2+) contacts are provided by D19, D21, N23, K25, E30, D55, D57, D59, S61, E66, D86, N88, S90, T92, E97, D123, N125, D127, Q129, and E134. Solcar repeat units follow at residues 184 to 268, 276 to 362, and 375 to 461; these read RNTI…VKKL, LTSA…LKHK, and GQLL…FKKA. A helical membrane pass occupies residues 190 to 207; it reads MLAGSVAGFASRTSTAPL. Residues 208–242 lie on the Mitochondrial matrix side of the membrane; the sequence is ERVKIMCQLNHGKPISLISAFKACYKDGGIKGFFR. The helical transmembrane segment at 243–263 threads the bilayer; sequence GNLANIIKVSPESAVKFGTYE. Residues 264–281 are Mitochondrial intermembrane-facing; the sequence is YVKKLFAENDCELTSAQR. The helical transmembrane segment at 282 to 302 threads the bilayer; that stretch reads FISGSVAGVVSHTTLFPLEVV. The Mitochondrial matrix segment spans residues 303 to 330; the sequence is RLRLSAEIAGTYNGIFDCFKKIAISEKS. Residues 331–351 form a helical membrane-spanning segment; sequence IRPFYRGLGASITATIPHSGV. The Mitochondrial intermembrane portion of the chain corresponds to 352–377; it reads NMMVYEFLKHKVIKMTGNEFPTAGQL. Residues 378-398 traverse the membrane as a helical segment; that stretch reads LVCASTSSVCGQLVGYPFHVV. The Mitochondrial matrix portion of the chain corresponds to 399-441; the sequence is KSRLITQGSSVNQEKYTGLFDGLTKIIKKEGPIGLYKGIVPSF. The helical transmembrane segment at 442 to 462 threads the bilayer; the sequence is MKSIPSHSITFIVYEGFKKAF. Residues 463 to 472 are Mitochondrial intermembrane-facing; it reads DVNLKEKKHH.

Belongs to the mitochondrial carrier (TC 2.A.29) family.

The protein localises to the mitochondrion inner membrane. Functionally, calcium-dependent mitochondrial solute carrier. Mitochondrial solute carriers shuttle metabolites, nucleotides, and cofactors through the mitochondrial inner membrane. This chain is Mitochondrial substrate carrier family protein C (mcfC), found in Dictyostelium discoideum (Social amoeba).